The following is a 280-amino-acid chain: Golgi to ER traffic protein 2 (280 aa).

Basic and acidic residues-rich tracts occupy residues 1–17 (MSLS…ERRQ), 44–62 (SALD…EAVK), and 71–80 (AKKESTAQAK). Positions 1–80 (MSLSEAEKRK…AKKESTAQAK (80 aa)) are disordered. At 1-146 (MSLSEAEKRK…VEYHKYRVNT (146 aa)) the chain is on the cytoplasmic side. Residues 147–166 (LTAKTTLVKWIVLLAYIFLL) form a helical membrane-spanning segment. Over 167–191 (TRTDDTYFPFVVRSYLPEVFTSQSS) the chain is Lumenal. A helical transmembrane segment spans residues 192–211 (FFSIFLTFEILATSIYYQLS). The Cytoplasmic segment spans residues 212–258 (VGVERETGVKTLQDTSKIVSLVSMVPEGILPIADLRGKVILAMKYWN). The helical transmembrane segment at 259 to 279 (IIAMMIGDVCFVLVAIGLVSQ) threads the bilayer. I280 is a topological domain (lumenal).

It belongs to the GET2 family. As to quaternary structure, component of the Golgi to ER traffic (GET) complex, which is composed of GET1, GET2 and GET3. Within the complex, GET1 and GET2 form a heterotetramer which is stabilized by phosphatidylinositol binding and which binds to the GET3 homodimer.

It is found in the endoplasmic reticulum membrane. It localises to the golgi apparatus membrane. In terms of biological role, required for the post-translational delivery of tail-anchored (TA) proteins to the endoplasmic reticulum. Together with GET1, acts as a membrane receptor for soluble GET3, which recognizes and selectively binds the transmembrane domain of TA proteins in the cytosol. The GET complex cooperates with the HDEL receptor ERD2 to mediate the ATP-dependent retrieval of resident ER proteins that contain a C-terminal H-D-E-L retention signal from the Golgi to the ER. In Candida glabrata (strain ATCC 2001 / BCRC 20586 / JCM 3761 / NBRC 0622 / NRRL Y-65 / CBS 138) (Yeast), this protein is Golgi to ER traffic protein 2.